The following is a 161-amino-acid chain: MSTTPTLSHLDESGQIRMVDVGHKTDTDRVAIARGSVRMNATAYGLLTQPGQGKGEVLNTARVAAVLAAKRCAELIPLCHSLPLAFVGIDFELDEAAYSVHIRATCRTQYKTGVEMEAMTACSVAALTIYDMCKAADKGIVIEQIRLQYKAGGKSGEWRND.

Substrate is bound by residues 78–80 (LCH) and 116–117 (ME). The active site involves Asp131.

The protein belongs to the MoaC family. Homohexamer; trimer of dimers.

The enzyme catalyses (8S)-3',8-cyclo-7,8-dihydroguanosine 5'-triphosphate = cyclic pyranopterin phosphate + diphosphate. Its pathway is cofactor biosynthesis; molybdopterin biosynthesis. Its function is as follows. Catalyzes the conversion of (8S)-3',8-cyclo-7,8-dihydroguanosine 5'-triphosphate to cyclic pyranopterin monophosphate (cPMP). The polypeptide is Cyclic pyranopterin monophosphate synthase (Bordetella parapertussis (strain 12822 / ATCC BAA-587 / NCTC 13253)).